Here is a 142-residue protein sequence, read N- to C-terminus: Large ribosomal subunit protein uL13 (142 aa).

The protein belongs to the universal ribosomal protein uL13 family. In terms of assembly, part of the 50S ribosomal subunit.

Functionally, this protein is one of the early assembly proteins of the 50S ribosomal subunit, although it is not seen to bind rRNA by itself. It is important during the early stages of 50S assembly. The polypeptide is Large ribosomal subunit protein uL13 (Herminiimonas arsenicoxydans).